Consider the following 230-residue polypeptide: RING finger protein 141 (230 aa).

Gly2 is lipidated: N-myristoyl glycine. The RING-type zinc-finger motif lies at 155-192 (CCICMDGRADLILPCAHSFCQKCIDKWSDRHRNCPICR).

Isoform 1 is testis-specific. Isoform 2 is expressed in heart, brain, skeletal muscle, kidney, pancreas, lung, liver and testis. Isoform 3 is expressed in heart, liver, and kidney.

It localises to the membrane. Functionally, may be involved in spermatogenesis. The protein is RING finger protein 141 (Rnf141) of Mus musculus (Mouse).